The primary structure comprises 381 residues: Creatine kinase B-type (381 aa).

Residue S4 is modified to Phosphoserine. Residues 11–98 form the Phosphagen kinase N-terminal domain; the sequence is KLRFPAEDEF…FDPIIEDRHG (88 aa). A Phosphothreonine modification is found at T35. K45 participates in a covalent cross-link: Glycyl lysine isopeptide (Lys-Gly) (interchain with G-Cter in ubiquitin). V72 contacts creatine. The span at 96 to 110 shows a compositional bias: basic and acidic residues; it reads RHGGYKPSDEHKTDL. Residues 96–122 form a disordered region; that stretch reads RHGGYKPSDEHKTDLNPDNLQGGDDLD. Residues K101 and K107 each participate in a glycyl lysine isopeptide (Lys-Gly) (interchain with G-Cter in ubiquitin) cross-link. Y125 is modified (phosphotyrosine). The Phosphagen kinase C-terminal domain occupies 125-367; that stretch reads YVLSSRVRTG…KLLIEMEQRL (243 aa). ATP contacts are provided by residues 128-132, R130, R132, and H191; that span reads SSRVR. The tract at residues 130-138 is internal MTS-like signal; that stretch reads RVRTGRSIR. S199 bears the Phosphoserine mark. E232 lines the creatine pocket. Position 236 (R236) interacts with ATP. Y269 is modified (3'-nitrotyrosine). Residue S285 participates in creatine binding. R292 is a binding site for ATP. Residue S309 is modified to Phosphoserine. Residues R320, 320 to 325, and D335 each bind ATP; that span reads RGTGGV. A Phosphothreonine modification is found at T322. K381 participates in a covalent cross-link: Glycyl lysine isopeptide (Lys-Gly) (interchain with G-Cter in ubiquitin).

The protein belongs to the ATP:guanido phosphotransferase family. In terms of assembly, dimer of identical or non-identical chains, which can be either B (brain type) or M (muscle type). With MM being the major form in skeletal muscle and myocardium, MB existing in myocardium, and BB existing in many tissues, especially brain. Interacts with SLC12A6 (via C-terminus); the interaction may be required for SLC12A6 potassium-chloride cotransport activity. Post-translationally, ubiquitinated by the ECS(ASB9) complex, leading to its degradation by the proteasome.

Its subcellular location is the cytoplasm. The protein localises to the cytosol. It is found in the mitochondrion. It localises to the cell membrane. It catalyses the reaction creatine + ATP = N-phosphocreatine + ADP + H(+). In terms of biological role, reversibly catalyzes the transfer of phosphate between ATP and various phosphogens (e.g. creatine phosphate). Creatine kinase isoenzymes play a central role in energy transduction in tissues with large, fluctuating energy demands, such as skeletal muscle, heart, brain and spermatozoa. Acts as a key regulator of adaptive thermogenesis as part of the futile creatine cycle: localizes to the mitochondria of thermogenic fat cells and acts by mediating phosphorylation of creatine to initiate a futile cycle of creatine phosphorylation and dephosphorylation. During the futile creatine cycle, creatine and N-phosphocreatine are in a futile cycle, which dissipates the high energy charge of N-phosphocreatine as heat without performing any mechanical or chemical work. This chain is Creatine kinase B-type, found in Homo sapiens (Human).